We begin with the raw amino-acid sequence, 65 residues long: Weak neurotoxin 6 (65 aa).

Cystine bridges form between Cys3–Cys24, Cys6–Cys11, Cys17–Cys42, Cys46–Cys57, and Cys58–Cys63.

The protein belongs to the three-finger toxin family. Ancestral subfamily. Orphan group II sub-subfamily. As to expression, expressed by the venom gland.

It localises to the secreted. Its function is as follows. Binds with low affinity to muscular (alpha-1-beta-1-delta-epsilon/CHRNA1-CHRNB1-CHRND-CHRNE) and very low affinity to neuronal (alpha-7/CHRNA7) nicotinic acetylcholine receptor (nAChR). The sequence is that of Weak neurotoxin 6 from Naja naja (Indian cobra).